The chain runs to 131 residues: CDGSH iron-sulfur domain-containing protein 2 homolog A (131 aa).

Residues 1–35 (MEFLSKIVRVHIPDYLNSVPVPDSFGGFLDLTAGQ) lie on the Lumenal side of the membrane. The helical transmembrane segment at 36–58 (WLHLFAFSGTVAAAVYMSVKPYL) threads the bilayer. The Cytoplasmic segment spans residues 59-131 (DKKDQKDQLV…GPLVLKRKDV (73 aa)). [2Fe-2S] cluster-binding residues include Cys-95, Cys-97, Cys-106, and His-110.

The protein belongs to the CISD protein family. CISD2 subfamily. [2Fe-2S] cluster is required as a cofactor.

The protein resides in the endoplasmic reticulum membrane. The polypeptide is CDGSH iron-sulfur domain-containing protein 2 homolog A (Branchiostoma floridae (Florida lancelet)).